A 230-amino-acid polypeptide reads, in one-letter code: Phosphatidylserine decarboxylase proenzyme (230 aa).

Ser-186 (schiff-base intermediate with substrate; via pyruvic acid) is an active-site residue. Ser-186 is modified (pyruvic acid (Ser); by autocatalysis).

This sequence belongs to the phosphatidylserine decarboxylase family. PSD-A subfamily. In terms of assembly, heterodimer of a large membrane-associated beta subunit and a small pyruvoyl-containing alpha subunit. Requires pyruvate as cofactor. In terms of processing, is synthesized initially as an inactive proenzyme. Formation of the active enzyme involves a self-maturation process in which the active site pyruvoyl group is generated from an internal serine residue via an autocatalytic post-translational modification. Two non-identical subunits are generated from the proenzyme in this reaction, and the pyruvate is formed at the N-terminus of the alpha chain, which is derived from the carboxyl end of the proenzyme. The post-translation cleavage follows an unusual pathway, termed non-hydrolytic serinolysis, in which the side chain hydroxyl group of the serine supplies its oxygen atom to form the C-terminus of the beta chain, while the remainder of the serine residue undergoes an oxidative deamination to produce ammonia and the pyruvoyl prosthetic group on the alpha chain.

It localises to the cell membrane. The catalysed reaction is a 1,2-diacyl-sn-glycero-3-phospho-L-serine + H(+) = a 1,2-diacyl-sn-glycero-3-phosphoethanolamine + CO2. It functions in the pathway phospholipid metabolism; phosphatidylethanolamine biosynthesis; phosphatidylethanolamine from CDP-diacylglycerol: step 2/2. Catalyzes the formation of phosphatidylethanolamine (PtdEtn) from phosphatidylserine (PtdSer). The protein is Phosphatidylserine decarboxylase proenzyme of Wolbachia sp. subsp. Brugia malayi (strain TRS).